Reading from the N-terminus, the 251-residue chain is Triosephosphate isomerase (251 aa).

A substrate-binding site is contributed by 12–14 (NWK). The active-site Electrophile is the His-99. Glu-169 (proton acceptor) is an active-site residue. Residues Gly-175, Ser-214, and 235-236 (GG) each bind substrate.

It belongs to the triosephosphate isomerase family. Homodimer.

It localises to the cytoplasm. The catalysed reaction is D-glyceraldehyde 3-phosphate = dihydroxyacetone phosphate. Its pathway is carbohydrate biosynthesis; gluconeogenesis. It functions in the pathway carbohydrate degradation; glycolysis; D-glyceraldehyde 3-phosphate from glycerone phosphate: step 1/1. In terms of biological role, involved in the gluconeogenesis. Catalyzes stereospecifically the conversion of dihydroxyacetone phosphate (DHAP) to D-glyceraldehyde-3-phosphate (G3P). The protein is Triosephosphate isomerase of Bradyrhizobium sp. (strain BTAi1 / ATCC BAA-1182).